The chain runs to 614 residues: Protein YehQ (614 aa).

SWIM-type zinc fingers lie at residues Val55–Gln89 and Ser151–Val185.

This Escherichia coli (strain K12) protein is Protein YehQ (yehQ).